A 301-amino-acid polypeptide reads, in one-letter code: uncharacterized protein (301 aa).

It belongs to the asfivirus E301R family. In terms of assembly, interacts with host IRF3.

Its function is as follows. Plays a role in the inhibition of host innate immune system by acting as a negatively regulator of type I interferon production. Mechanistically, interacts with and prevents host IRF3 nuclear localization to inhibit its transcriptional activity. This is an uncharacterized protein from African swine fever virus (isolate Warthog/Namibia/Wart80/1980) (ASFV).